A 262-amino-acid chain; its full sequence is MQYKTKAKKSLGQNFLQDENIIRKIVQLANIKKHDIVVEIGPGLGALTRYLLSSSNNVSVVEFDASVIDTLIANCQKYGTPHIYNQDFLKFDISSLENSSNQKIKLIGNLPYNISSPILFKVIKDSDKIVDAHFMLQKEVVERIVSLPNSKSYGRLSVILQYHFDCSMILKIPPEVFYPQPKVDSAILRLKPKNSKELLKNYNFFEEIVKQSFAQRRKTLHNNLKSILKERKIDPSTLPVDTNLRAENLSVGDFVSLANFLS.

The S-adenosyl-L-methionine site is built by Asn14, Leu16, Gly41, Glu62, Asp87, and Asn109.

This sequence belongs to the class I-like SAM-binding methyltransferase superfamily. rRNA adenine N(6)-methyltransferase family. RsmA subfamily.

The protein localises to the cytoplasm. The enzyme catalyses adenosine(1518)/adenosine(1519) in 16S rRNA + 4 S-adenosyl-L-methionine = N(6)-dimethyladenosine(1518)/N(6)-dimethyladenosine(1519) in 16S rRNA + 4 S-adenosyl-L-homocysteine + 4 H(+). Its function is as follows. Specifically dimethylates two adjacent adenosines (A1518 and A1519) in the loop of a conserved hairpin near the 3'-end of 16S rRNA in the 30S particle. May play a critical role in biogenesis of 30S subunits. This Francisella tularensis subsp. holarctica (strain FTNF002-00 / FTA) protein is Ribosomal RNA small subunit methyltransferase A.